The primary structure comprises 477 residues: Inositol phosphosphingolipids phospholipase C (477 aa).

The Cytoplasmic segment spans residues 1–398 (MYNRKDRDVH…QRQKFFRGLH (398 aa)). Position 100 (E100) interacts with Mg(2+). The active-site Proton acceptor is the H334. A helical membrane pass occupies residues 399-417 (FWASILLLIASLVVTTFTA). Residues 418–424 (NKAGWSS) lie on the Mitochondrial intermembrane side of the membrane. The helical transmembrane segment at 425–449 (IFWVLFAIAVSISGTIDGAISFLFG) threads the bilayer. At 450 to 477 (RSEIRALIEVEQEVLDAEHHLQTFLSEK) the chain is on the cytoplasmic side.

This sequence belongs to the neutral sphingomyelinase family. The cofactor is Mg(2+).

It is found in the endoplasmic reticulum membrane. The protein resides in the mitochondrion outer membrane. It catalyses the reaction an N-acyl-(4R)-4-hydroxysphinganine-1-phosphoinositol + H2O = 1D-myo-inositol 1-phosphate + an N-acyl-(4R)-4-hydroxysphinganine + H(+). The enzyme catalyses a mannosylinositol-1-phospho-N-acyl-sphingoid base + H2O = mannosylinositol-1-phosphate + an N-acyl-sphingoid base + H(+). It carries out the reaction an inositol phosphomannosylinositol-1-phospho-N-acyl-(4R)-4-hydroxysphinganine + H2O = mannosyldiinositol-1-phosphate + an N-acyl-(4R)-4-hydroxysphinganine + H(+). It functions in the pathway lipid metabolism; sphingolipid metabolism. With respect to regulation, activated through localization to mitochondria in specific growth phases. In terms of biological role, responsible for the hydrolysis of the phosphosphingolipids (IPS), inositol phosphorylceramide (IPC), mannosylinositol phosphorylceramide (MIPC), and mannosyldiinositol phosphorylceramide (M(IP)2C). Regulates sphingolipid metabolism in mitochondria, especially the formation of alpha-hydroxylated very long chain phytoceramides. The generated ceramides contribute to the normal function of mitochondria. Also active on sphingomyelin (SM), but this activity is probably not physiologically relevant. The polypeptide is Inositol phosphosphingolipids phospholipase C (Saccharomyces cerevisiae (strain ATCC 204508 / S288c) (Baker's yeast)).